The chain runs to 185 residues: Photosystem I assembly protein Ycf4 (185 aa).

Helical transmembrane passes span 24–44 and 58–78; these read YIIG…SISS and ALLF…ANLL.

It belongs to the Ycf4 family.

The protein localises to the cellular thylakoid membrane. Its function is as follows. Seems to be required for the assembly of the photosystem I complex. The protein is Photosystem I assembly protein Ycf4 of Prochlorococcus marinus (strain MIT 9215).